We begin with the raw amino-acid sequence, 130 residues long: Glycine cleavage system H protein (130 aa).

The Lipoyl-binding domain occupies 24–106 (TFTVGITDHA…YGDGWLYRIT (83 aa)). At Lys65 the chain carries N6-lipoyllysine.

This sequence belongs to the GcvH family. As to quaternary structure, the glycine cleavage system is composed of four proteins: P, T, L and H. Requires (R)-lipoate as cofactor.

Functionally, the glycine cleavage system catalyzes the degradation of glycine. The H protein shuttles the methylamine group of glycine from the P protein to the T protein. The chain is Glycine cleavage system H protein from Coxiella burnetii (strain CbuK_Q154) (Coxiella burnetii (strain Q154)).